The chain runs to 96 residues: ATP synthase subunit c (96 aa).

A run of 2 helical transmembrane segments spans residues 9 to 29 (FIAC…GCGI) and 58 to 78 (IGLA…LILI).

The protein belongs to the ATPase C chain family. As to quaternary structure, F-type ATPases have 2 components, F(1) - the catalytic core - and F(0) - the membrane proton channel. F(1) has five subunits: alpha(3), beta(3), gamma(1), delta(1), epsilon(1). F(0) has three main subunits: a(1), b(2) and c(10-14). The alpha and beta chains form an alternating ring which encloses part of the gamma chain. F(1) is attached to F(0) by a central stalk formed by the gamma and epsilon chains, while a peripheral stalk is formed by the delta and b chains.

It is found in the cell inner membrane. Functionally, f(1)F(0) ATP synthase produces ATP from ADP in the presence of a proton or sodium gradient. F-type ATPases consist of two structural domains, F(1) containing the extramembraneous catalytic core and F(0) containing the membrane proton channel, linked together by a central stalk and a peripheral stalk. During catalysis, ATP synthesis in the catalytic domain of F(1) is coupled via a rotary mechanism of the central stalk subunits to proton translocation. Key component of the F(0) channel; it plays a direct role in translocation across the membrane. A homomeric c-ring of between 10-14 subunits forms the central stalk rotor element with the F(1) delta and epsilon subunits. The chain is ATP synthase subunit c from Desulfosudis oleivorans (strain DSM 6200 / JCM 39069 / Hxd3) (Desulfococcus oleovorans).